A 339-amino-acid polypeptide reads, in one-letter code: Phenylalanine--tRNA ligase alpha subunit (339 aa).

A Mg(2+)-binding site is contributed by Glu254.

Belongs to the class-II aminoacyl-tRNA synthetase family. Phe-tRNA synthetase alpha subunit type 1 subfamily. As to quaternary structure, tetramer of two alpha and two beta subunits. It depends on Mg(2+) as a cofactor.

The protein localises to the cytoplasm. The enzyme catalyses tRNA(Phe) + L-phenylalanine + ATP = L-phenylalanyl-tRNA(Phe) + AMP + diphosphate + H(+). This chain is Phenylalanine--tRNA ligase alpha subunit, found in Clostridium acetobutylicum (strain ATCC 824 / DSM 792 / JCM 1419 / IAM 19013 / LMG 5710 / NBRC 13948 / NRRL B-527 / VKM B-1787 / 2291 / W).